The sequence spans 285 residues: Bifunctional protein FolD (285 aa).

Residues glycine 165–glycine 167, threonine 192, and valine 233 contribute to the NADP(+) site.

Belongs to the tetrahydrofolate dehydrogenase/cyclohydrolase family. As to quaternary structure, homodimer.

The catalysed reaction is (6R)-5,10-methylene-5,6,7,8-tetrahydrofolate + NADP(+) = (6R)-5,10-methenyltetrahydrofolate + NADPH. The enzyme catalyses (6R)-5,10-methenyltetrahydrofolate + H2O = (6R)-10-formyltetrahydrofolate + H(+). It participates in one-carbon metabolism; tetrahydrofolate interconversion. In terms of biological role, catalyzes the oxidation of 5,10-methylenetetrahydrofolate to 5,10-methenyltetrahydrofolate and then the hydrolysis of 5,10-methenyltetrahydrofolate to 10-formyltetrahydrofolate. This Corynebacterium jeikeium (strain K411) protein is Bifunctional protein FolD.